Here is a 930-residue protein sequence, read N- to C-terminus: Probable SapB synthase (930 aa).

The Protein kinase domain occupies 256-516 (YTVESALHFS…GSTRADETTR (261 aa)). ATP-binding positions include 262-270 (LHFSNGGGV) and Lys285. Asp395 serves as the catalytic Proton acceptor. The helical transmembrane segment at 447–467 (YALACLRIVLFLPLTSLLAVD) threads the bilayer. The segment covering 501–527 (GSTRVDGSTRADETTRADETTRLDVTT) has biased composition (basic and acidic residues). Disordered regions lie at residues 501 to 558 (GSTR…RDSM) and 911 to 930 (PFLP…HQEP). The span at 532 to 546 (APDAARRPAGPVAPV) shows a compositional bias: low complexity. The span at 547–556 (RPDDWPRSRD) shows a compositional bias: basic and acidic residues.

This sequence in the N-terminal section; belongs to the protein kinase superfamily.

Its subcellular location is the cell membrane. In terms of biological role, required for aerial hyphae formation. Probably involved in processing the precursor of SapB to its mature form. This chain is Probable SapB synthase, found in Streptomyces coelicolor (strain ATCC BAA-471 / A3(2) / M145).